A 206-amino-acid chain; its full sequence is MHNAKRAIFKKRENMQKSSHDSILECNAQAFFESLCQNVGENPTREGLLHTPKRIASAFSDMLNGYAKSPKQALGSVFEDGVCDEMIVLKKLHFYSICEHHLLPFFGHISIGYIPDKKLVGISGLARLTEVFTHRLQIQERLTAQIADALIAELKPKGAMIVCQARHLCLEMRSNVPQSHIITSALRGLFKKDSRTRAEFMQILKD.

The Zn(2+) site is built by C98, H101, and C169.

Belongs to the GTP cyclohydrolase I family. In terms of assembly, toroid-shaped homodecamer, composed of two pentamers of five dimers.

The enzyme catalyses GTP + H2O = 7,8-dihydroneopterin 3'-triphosphate + formate + H(+). The protein operates within cofactor biosynthesis; 7,8-dihydroneopterin triphosphate biosynthesis; 7,8-dihydroneopterin triphosphate from GTP: step 1/1. This chain is GTP cyclohydrolase 1, found in Helicobacter hepaticus (strain ATCC 51449 / 3B1).